The chain runs to 808 residues: MQMPSMHRYGHPGQNQRRENQSIRNYLSTRSGSRNRISRSPHNMASVYTRAPAIAYDDDTYDTLEESEDNGFVKTIPNEEQFDNSRGRDRTRSGRSNGHSFLGYLRDTFTERQPSGRRGSDTSRDMINASLKSRARSRRRSSSRRRHRNASMHMHFRGGSRRSATGSQNLINHDRHRRISQSSLGSSREGEYNHASRSSRVRRRHRRSSRRRGPRAGGHGDSFTSITPSGSAEHPISDIDQKRLRKNSDTSSRGTRESPIDDSFGEDNYRLVSRNRATSIYTTPSALYTRTESLKTYKRTTGDSKGTSPALASFLEHKTLSADVINHIPLLRMLESVPRSEAIREDELLYMSAKTFKYVSHWYSNSRPDYANGKMYTSPPPENALAWKRTAKQAHALILHLGRDSLRSSVMSLRELNQSNAVLFLLNSCLKIAICIHKNKMHKYGNVKILSTMPHVRKGDAQIFENSTIHTMRDPMASAARASYGSLAYWPELRCALGSENKRIVRYAIVAMLQAEIYLLTRISSQRVSMNKSELRILSSCITMECVAACIAVQFLYTSLWQILYSSKINREYIWLKTASERSKKLPMASTDLLYAEGACLGRLESSLYGTEGTPLGRTLVEAYLATRSAFTELIYEFQSNSDLFLEKQNVKLGEKLTAAVITATVVLQRLLGHLNIIIAQMVIGSVYHKKDVDVWSETFKMYQYLSYVCKSLYRPVTIDEYINDRDDTMEYLTLEFARGDPPTGMASVIYEDEKSEELESLKLVPPPINYDILGNLVPLRNAIEDASDVIFEKRAVETARREPQRAN.

2 disordered regions span residues 1-21 (MQMP…RENQ) and 77-266 (PNEE…SFGE). Basic and acidic residues predominate over residues 83 to 92 (DNSRGRDRTR). Positions 133–160 (SRARSRRRSSSRRRHRNASMHMHFRGGS) are enriched in basic residues. Polar residues predominate over residues 162-171 (RSATGSQNLI). Positions 197–214 (RSSRVRRRHRRSSRRRGP) are enriched in basic residues. The segment covering 235–259 (PISDIDQKRLRKNSDTSSRGTRESP) has biased composition (basic and acidic residues).

The protein belongs to the alphaherpesvirinae HHV-1 UL47 family. Interacts with US3 kinase. Interacts with UL31 and UL34; these interactions seem important for efficient virion nuclear egress. Interacts with UL41/VHS. Phosphorylated by US3. This phosphorylation is required for proper nuclear localization. In terms of processing, O-glycosylated.

The protein resides in the virion tegument. It is found in the host nucleus. It localises to the host cytoplasm. In terms of biological role, tegument protein that can bind to various RNA transcripts. Plays a role in the attenuation of selective viral and cellular mRNA degradation by modulating the activity of host shutoff RNase UL41/VHS. Also plays a role in the primary envelopment of virions in the perinuclear space, probably by interacting with two nuclear egress proteins UL31 and UL34. Plays an important role in the splicing of glycoprotein/gC transcripts and thereby participates in bird-to-bird viral transmission. This Gallus gallus (Chicken) protein is Tegument protein UL47 homolog (MDV060).